Consider the following 483-residue polypeptide: Succinate semialdehyde dehydrogenase (483 aa).

Residues 156–157 (WN), 180–183 (KPAP), and 233–234 (GS) each bind NAD(+). Residue E255 is the Proton acceptor of the active site. L256 provides a ligand contact to NAD(+). C289 functions as the Nucleophile in the catalytic mechanism. E386 is a binding site for NAD(+).

It belongs to the aldehyde dehydrogenase family. As to quaternary structure, homotetramer.

It carries out the reaction succinate semialdehyde + NAD(+) + H2O = succinate + NADH + 2 H(+). Its function is as follows. Involved in the degradation of the pyridine ring of trigonelline (TG; N-methylnicotinate) into succinate and methylamine as carbon and nitrogen sources, respectively. Catalyzes the NAD(+)-dependent oxidation of succinate semialdehyde to succinate. The sequence is that of Succinate semialdehyde dehydrogenase from Acinetobacter baylyi (strain ATCC 33305 / BD413 / ADP1).